Here is a 124-residue protein sequence, read N- to C-terminus: Holo-[acyl-carrier-protein] synthase (124 aa).

Residues Asp8 and Glu58 each coordinate Mg(2+).

Belongs to the P-Pant transferase superfamily. AcpS family. It depends on Mg(2+) as a cofactor.

It localises to the cytoplasm. The catalysed reaction is apo-[ACP] + CoA = holo-[ACP] + adenosine 3',5'-bisphosphate + H(+). Functionally, transfers the 4'-phosphopantetheine moiety from coenzyme A to a Ser of acyl-carrier-protein. The polypeptide is Holo-[acyl-carrier-protein] synthase (Lacticaseibacillus casei (strain BL23) (Lactobacillus casei)).